We begin with the raw amino-acid sequence, 212 residues long: Ion-translocating oxidoreductase complex subunit G (212 aa).

The chain crosses the membrane as a helical span at residues 9–29; it reads GLLLALFALLCTGLVAVVNQQ. FMN phosphoryl threonine is present on Thr176.

It belongs to the RnfG family. The complex is composed of six subunits: RnfA, RnfB, RnfC, RnfD, RnfE and RnfG. FMN is required as a cofactor.

It is found in the cell inner membrane. In terms of biological role, part of a membrane-bound complex that couples electron transfer with translocation of ions across the membrane. This Shewanella oneidensis (strain ATCC 700550 / JCM 31522 / CIP 106686 / LMG 19005 / NCIMB 14063 / MR-1) protein is Ion-translocating oxidoreductase complex subunit G.